The sequence spans 137 residues: Sch210972 biosynthesis cluster protein E (137 aa).

A compositionally biased stretch (polar residues) spans 1-12 (MTKYTSVNSSLP). The segment at 1–137 (MTKYTSVNSS…ASTIRPPCCG (137 aa)) is disordered. The span at 15–27 (PRQTTPTRPATQT) shows a compositional bias: low complexity. Residues 51-71 (GSLNGSPTLRTTLDTSLSGTR) are compositionally biased toward polar residues. The span at 94–109 (DEDHPHDPGPDSDAKK) shows a compositional bias: basic and acidic residues.

It functions in the pathway secondary metabolite biosynthesis. In terms of biological role, part of the gene cluster that mediates the biosynthesis of the tetramic acid Sch210972, a potential anti-HIV fungal natural product that contains a decalin core. The PKS module of cghG together with the enoylreductase cghC catalyze the formation of the polyketide unit which is then conjugated to 4-hydroxyl-4-methyl glutamate (HMG) by the condensation domain of the cghG NRPS module. One unique structural feature of Sch210972 is the tetramic acid motif proposed to be derived from the non-proteinogenic amino acid HMG, by a Dieckmann-type condensation catalyzed by the reductase domain of cghG. The aldolase cghB catalyzes the aldol condensation of 2 molecules of pyruvic acid to yield the intermediate 4-hydroxyl-4-methyl-2-oxoglutarate (HMOG), which can then be stereoselectively transaminated by an unidentified enzyme to form HMG. The Diels-Alderase cghA then uses the Dieckmann product released by cghG as substrate and catalyzes the Diels-Alder cycloaddition to form the decalin ring of Sch210972. CghA also suppresses the nonenzymatic formation of the alternative stereoisomer. The protein is Sch210972 biosynthesis cluster protein E of Chaetomium globosum (strain ATCC 6205 / CBS 148.51 / DSM 1962 / NBRC 6347 / NRRL 1970) (Soil fungus).